A 604-amino-acid chain; its full sequence is Polycomb group protein EMF2B (604 aa).

The segment at 310–331 (CPFCLVPCGSFKGLGCHLNASH) adopts a C2H2-type zinc-finger fold. Residues 396–440 (PHIVDSGSPEDAQAGSEDDYVQRENGSSVAHASVDPANSLHGSNL) form a disordered region. The VEFS-box stretch occupies residues 454 to 589 (LSVERADPRN…DARAMNACNT (136 aa)).

This sequence belongs to the VEFS (VRN2-EMF2-FIS2-SU(Z)12) family. As to quaternary structure, component of the polycomb repressive complex 2 (PRC2), composed of the core PRC2 components FIE2, EZ1 and CLF. PRC2 methylates 'Lys-27' residues of histone H3 (H3K27me3), leading to transcriptional repression of the affected target gene. Widely expressed.

In terms of biological role, polycomb group (PcG) protein. PcG proteins act by forming multiprotein complexes, which are required to maintain the transcriptionally repressive state of homeotic genes throughout development. PcG proteins are not required to initiate repression, but to maintain it during later stages of development. They act via the methylation of histones, rendering chromatin heritably changed in its expressibility. Polycomb group (PcG) protein involved in the repression of flowering under long day (LD) conditions. Regulates floret development. In Oryza sativa subsp. japonica (Rice), this protein is Polycomb group protein EMF2B.